A 348-amino-acid polypeptide reads, in one-letter code: (+)-germacrene D synthase (348 aa).

Asp-97, Asp-101, Asn-242, and Ser-246 together coordinate Mg(2+). The DDXXD motif motif lies at 97-101 (DDILD).

This sequence belongs to the terpene synthase family. Mg(2+) serves as cofactor.

The enzyme catalyses (2E,6E)-farnesyl diphosphate = (+)-germacrene D + diphosphate. The protein operates within secondary metabolite biosynthesis; terpenoid biosynthesis. In terms of biological role, sesquiterpene synthase converting farnesyl diphosphate to eight sesquiterpenes, with (+)-germacrene D and an unidentified oxygenated sesquiterpene as the major products. Has no diterpene synthase activity. This chain is (+)-germacrene D synthase, found in Selaginella moellendorffii (Spikemoss).